A 179-amino-acid chain; its full sequence is Putative DUP240 protein DFP1 (179 aa).

2 helical membrane-spanning segments follow: residues Phe4–Leu24 and Pro26–Phe46.

The protein belongs to the DUP/COS family.

It is found in the membrane. The sequence is that of Putative DUP240 protein DFP1 from Saccharomyces cerevisiae (strain ATCC 204508 / S288c) (Baker's yeast).